A 248-amino-acid chain; its full sequence is Ras-related protein Rab-28 (248 aa).

Positions 1–30 (MTTMGEDEAPALPKKSPLPEKIDEADVDDD) are disordered. GTP is bound at residue 42–50 (GDGASGKTS). An Effector region motif is present at residues 64-72 (YHQTLGLDF). GTP-binding positions include 91–95 (DIGGQ), 152–155 (NKTD), and 182–184 (SAK). The tract at residues 227 to 248 (QSDASYARRSDQSRSTSVCSIT) is disordered. Positions 239–248 (SRSTSVCSIT) are enriched in polar residues.

The protein belongs to the small GTPase superfamily. Rab family. As to expression, expressed in amphid and phasmid ciliated sensory neurons.

The protein localises to the cell projection. It localises to the cilium membrane. It is found in the perikaryon. Its subcellular location is the cytoplasm. The protein resides in the cytoskeleton. The protein localises to the cilium axoneme. In terms of biological role, GTPase. Intraflagellar transport (IFT) cargo that undergoes bidirectional IFT along the ciliary axoneme when in active GTP-bound state in amphid and phasmid ciliated sensory neurons. Targeting and function as IFT cargo may depend on the BBSome, an IFT cargo adapter. Does not undergo IFT when in inactive GDP-bound state. May in turn play a role in cilium structure and/or function in ciliated sensory neurons. This is Ras-related protein Rab-28 from Caenorhabditis elegans.